The following is a 212-amino-acid chain: Glycerol-3-phosphate acyltransferase (212 aa).

Transmembrane regions (helical) follow at residues 3-23, 70-90, 110-130, 143-163, and 164-184; these read IIIM…LWIG, IPII…FAII, AGVL…IFLL, ITVA…GFIL, and TDYD…IIIR.

It belongs to the PlsY family. In terms of assembly, probably interacts with PlsX.

Its subcellular location is the cell membrane. The enzyme catalyses an acyl phosphate + sn-glycerol 3-phosphate = a 1-acyl-sn-glycero-3-phosphate + phosphate. It participates in lipid metabolism; phospholipid metabolism. Catalyzes the transfer of an acyl group from acyl-phosphate (acyl-PO(4)) to glycerol-3-phosphate (G3P) to form lysophosphatidic acid (LPA). This enzyme utilizes acyl-phosphate as fatty acyl donor, but not acyl-CoA or acyl-ACP. This Streptococcus agalactiae serotype III (strain NEM316) protein is Glycerol-3-phosphate acyltransferase.